The primary structure comprises 307 residues: Ribonuclease Z (307 aa).

Residues His63, His65, Asp67, His68, His140, Asp211, and His269 each contribute to the Zn(2+) site. Asp67 acts as the Proton acceptor in catalysis.

The protein belongs to the RNase Z family. As to quaternary structure, homodimer. Zn(2+) serves as cofactor.

It carries out the reaction Endonucleolytic cleavage of RNA, removing extra 3' nucleotides from tRNA precursor, generating 3' termini of tRNAs. A 3'-hydroxy group is left at the tRNA terminus and a 5'-phosphoryl group is left at the trailer molecule.. Its function is as follows. Zinc phosphodiesterase, which displays some tRNA 3'-processing endonuclease activity. Probably involved in tRNA maturation, by removing a 3'-trailer from precursor tRNA. The chain is Ribonuclease Z from Bacillus subtilis (strain 168).